The chain runs to 159 residues: 6,7-dimethyl-8-ribityllumazine synthase (159 aa).

5-amino-6-(D-ribitylamino)uracil is bound by residues Y23, 58–60, and 82–84; these read AYE and TII. Residue H90 is the Proton donor of the active site. I115 provides a ligand contact to 5-amino-6-(D-ribitylamino)uracil. R129 is a binding site for (2S)-2-hydroxy-3-oxobutyl phosphate.

Belongs to the DMRL synthase family. In terms of assembly, forms an icosahedral capsid composed of 60 subunits, arranged as a dodecamer of pentamers.

It catalyses the reaction (2S)-2-hydroxy-3-oxobutyl phosphate + 5-amino-6-(D-ribitylamino)uracil = 6,7-dimethyl-8-(1-D-ribityl)lumazine + phosphate + 2 H2O + H(+). Its pathway is cofactor biosynthesis; riboflavin biosynthesis; riboflavin from 2-hydroxy-3-oxobutyl phosphate and 5-amino-6-(D-ribitylamino)uracil: step 1/2. Its function is as follows. Catalyzes the formation of 6,7-dimethyl-8-ribityllumazine by condensation of 5-amino-6-(D-ribitylamino)uracil with 3,4-dihydroxy-2-butanone 4-phosphate. This is the penultimate step in the biosynthesis of riboflavin. The chain is 6,7-dimethyl-8-ribityllumazine synthase from Buchnera aphidicola subsp. Baizongia pistaciae (strain Bp).